Consider the following 203-residue polypeptide: MGVAQISSAITPAQPAELYPGDIKSVLLTAEQIQARIAELGREIGDNYRDAAAETGQDLLLITVLKGAVIFVTDLARAIPLPTQFEFMAVSSYGSSTSSSGVVRILKDLDRDIQGRDVLIVEDVVDSGLTLSWLLRNLSTRHPRSLRVCTLLRKPDARGAHVDIAYVGFDIPNDFVVGYGLDYDERYRDLSYIGTLDPRVYQQ.

Residues K66 and G67 each contribute to the diphosphate site. 2 residues coordinate Mg(2+): E122 and D123. Residue D126 is the Proton acceptor of the active site. GMP-binding positions include K154, 175 to 176 (FV), and D182. A diphosphate-binding site is contributed by R188.

This sequence belongs to the purine/pyrimidine phosphoribosyltransferase family. Requires Mg(2+) as cofactor.

It is found in the cytoplasm. The enzyme catalyses IMP + diphosphate = hypoxanthine + 5-phospho-alpha-D-ribose 1-diphosphate. It catalyses the reaction GMP + diphosphate = guanine + 5-phospho-alpha-D-ribose 1-diphosphate. The protein operates within purine metabolism; IMP biosynthesis via salvage pathway; IMP from hypoxanthine: step 1/1. It functions in the pathway purine metabolism; GMP biosynthesis via salvage pathway; GMP from guanine: step 1/1. In terms of biological role, purine salvage pathway enzyme that catalyzes the transfer of the ribosyl-5-phosphate group from 5-phospho-alpha-D-ribose 1-diphosphate (PRPP) to the N9 position of the 6-oxopurines hypoxanthine and guanine to form the corresponding ribonucleotides IMP (inosine 5'-monophosphate) and GMP (guanosine 5'-monophosphate), with the release of PPi. This Mycobacterium avium protein is Hypoxanthine-guanine phosphoribosyltransferase (hpt).